The primary structure comprises 346 residues: Fe(3+) ions import ATP-binding protein FbpC 2 (346 aa).

Residues 2–234 enclose the ABC transporter domain; sequence LELHRVSKSF…PNSEDIATFL (233 aa). 34-41 lines the ATP pocket; it reads GPSGSGKT.

The protein belongs to the ABC transporter superfamily. Fe(3+) ion importer (TC 3.A.1.10) family. In terms of assembly, the complex is composed of two ATP-binding proteins (FbpC), two transmembrane proteins (FbpB) and a solute-binding protein (FbpA).

Its subcellular location is the cell inner membrane. The catalysed reaction is Fe(3+)(out) + ATP + H2O = Fe(3+)(in) + ADP + phosphate + H(+). Its function is as follows. Part of the ABC transporter complex FbpABC involved in Fe(3+) ions import. Responsible for energy coupling to the transport system. This Pectobacterium atrosepticum (strain SCRI 1043 / ATCC BAA-672) (Erwinia carotovora subsp. atroseptica) protein is Fe(3+) ions import ATP-binding protein FbpC 2.